The sequence spans 96 residues: Large ribosomal subunit protein uL23 (96 aa).

It belongs to the universal ribosomal protein uL23 family. In terms of assembly, part of the 50S ribosomal subunit. Contacts protein L29, and trigger factor when it is bound to the ribosome.

Functionally, one of the early assembly proteins it binds 23S rRNA. One of the proteins that surrounds the polypeptide exit tunnel on the outside of the ribosome. Forms the main docking site for trigger factor binding to the ribosome. The polypeptide is Large ribosomal subunit protein uL23 (Syntrophus aciditrophicus (strain SB)).